We begin with the raw amino-acid sequence, 322 residues long: Malate dehydrogenase (322 aa).

NAD(+) is bound by residues 10 to 15 (GSGMIG) and Asp-34. Residues Arg-83 and Arg-89 each contribute to the substrate site. NAD(+)-binding positions include Asn-96 and 119-121 (ITN). Asn-121 and Arg-152 together coordinate substrate. His-176 serves as the catalytic Proton acceptor.

It belongs to the LDH/MDH superfamily. MDH type 3 family.

It catalyses the reaction (S)-malate + NAD(+) = oxaloacetate + NADH + H(+). In terms of biological role, catalyzes the reversible oxidation of malate to oxaloacetate. The sequence is that of Malate dehydrogenase from Mesorhizobium japonicum (strain LMG 29417 / CECT 9101 / MAFF 303099) (Mesorhizobium loti (strain MAFF 303099)).